Here is a 316-residue protein sequence, read N- to C-terminus: Transaldolase (316 aa).

The active-site Schiff-base intermediate with substrate is K132.

It belongs to the transaldolase family. Type 1 subfamily.

The protein resides in the cytoplasm. The catalysed reaction is D-sedoheptulose 7-phosphate + D-glyceraldehyde 3-phosphate = D-erythrose 4-phosphate + beta-D-fructose 6-phosphate. It functions in the pathway carbohydrate degradation; pentose phosphate pathway; D-glyceraldehyde 3-phosphate and beta-D-fructose 6-phosphate from D-ribose 5-phosphate and D-xylulose 5-phosphate (non-oxidative stage): step 2/3. Functionally, transaldolase is important for the balance of metabolites in the pentose-phosphate pathway. This Methylomonas aminofaciens protein is Transaldolase.